A 46-amino-acid chain; its full sequence is DVQCGEGHFCHDXQTCCRASQGGXACCPYSQGVCCADQRHCCPVGF.

Disulfide bonds link C4–C16 and C10–C26.

The protein belongs to the granulin family.

The protein resides in the secreted. Functionally, has antimicrobial activity against Gram-negative and Gram-positive bacteria. This is Antimicrobial peptide eNAP-1 from Equus caballus (Horse).